The primary structure comprises 320 residues: Adhesin MafA 3 (320 aa).

Positions 1–18 (MQARLLIPILFSVFILSA) are cleaved as a signal peptide. Cys-19 carries N-palmitoyl cysteine lipidation. Cys-19 carries S-diacylglycerol cysteine lipidation. Polar residues predominate over residues 288-298 (HTGNSAPSVET). Positions 288–320 (HTGNSAPSVETDNSHEGYGYSDEVVRQHRQGQP) are disordered.

The protein belongs to the MafA family.

The protein localises to the cell outer membrane. The sequence is that of Adhesin MafA 3 (mafA3) from Neisseria meningitidis serogroup C / serotype 2a (strain ATCC 700532 / DSM 15464 / FAM18).